The chain runs to 175 residues: Adenine phosphoribosyltransferase (175 aa).

The protein belongs to the purine/pyrimidine phosphoribosyltransferase family. In terms of assembly, homodimer.

It is found in the cytoplasm. It carries out the reaction AMP + diphosphate = 5-phospho-alpha-D-ribose 1-diphosphate + adenine. The protein operates within purine metabolism; AMP biosynthesis via salvage pathway; AMP from adenine: step 1/1. Functionally, catalyzes a salvage reaction resulting in the formation of AMP, that is energically less costly than de novo synthesis. This is Adenine phosphoribosyltransferase from Parvibaculum lavamentivorans (strain DS-1 / DSM 13023 / NCIMB 13966).